A 344-amino-acid chain; its full sequence is Phenylalanine--tRNA ligase alpha subunit (344 aa).

Glu255 contacts Mg(2+).

The protein belongs to the class-II aminoacyl-tRNA synthetase family. Phe-tRNA synthetase alpha subunit type 1 subfamily. As to quaternary structure, tetramer of two alpha and two beta subunits. It depends on Mg(2+) as a cofactor.

It is found in the cytoplasm. It carries out the reaction tRNA(Phe) + L-phenylalanine + ATP = L-phenylalanyl-tRNA(Phe) + AMP + diphosphate + H(+). The protein is Phenylalanine--tRNA ligase alpha subunit of Sulfurihydrogenibium sp. (strain YO3AOP1).